The sequence spans 411 residues: 4-coumarate--CoA ligase (411 aa).

The protein belongs to the ATP-dependent AMP-binding enzyme family.

It catalyses the reaction (E)-4-coumarate + ATP + CoA = (E)-4-coumaroyl-CoA + AMP + diphosphate. In terms of biological role, converts p-coumaric acid into p-coumaryl CoA. This is necessary for the activation of the photoactive yellow protein (PYP) chromophore. This Cereibacter sphaeroides (strain ATCC 17023 / DSM 158 / JCM 6121 / CCUG 31486 / LMG 2827 / NBRC 12203 / NCIMB 8253 / ATH 2.4.1.) (Rhodobacter sphaeroides) protein is 4-coumarate--CoA ligase (pcl).